Here is a 94-residue protein sequence, read N- to C-terminus: Late cornified envelope protein 3C (94 aa).

The span at 1–10 shows a compositional bias: low complexity; that stretch reads MSCQQNQQQC. Disordered regions lie at residues 1 to 35 and 65 to 94; these read MSCQQNQQQCQPPPSCPSPKCPPKSPAQCLPPPSS and CRRQRSNSCDRGSGQQGGGSCRGHGSGGCC. The span at 11–34 shows a compositional bias: pro residues; it reads QPPPSCPSPKCPPKSPAQCLPPPS. Gly residues predominate over residues 78-94; the sequence is GQQGGGSCRGHGSGGCC.

It belongs to the LCE family. Interacts with CYSRT1; the interaction is direct. Skin-specific. Expression was readily detected in adult trunk skin, adult arm skin, fetal skin, penal skin, vulva, esophagus and tongue. Not expressed in the cervix, rectum, lung, colon, or placenta.

A structural component of the cornified envelope of the stratum corneum involved in innate cutaneous host defense. Possesses defensin-like antimicrobial activity against a broad spectrum of Gram-positive and Gram-negative bacteria, both aerobic and anaerobic species. Upon inflammation, may regulate skin barrier repair by shaping cutaneous microbiota composition and immune response to bacterial antigens. This chain is Late cornified envelope protein 3C, found in Homo sapiens (Human).